The sequence spans 757 residues: Filensin (757 aa).

The interval 1 to 39 is head; it reads MYRRSYVFQTRKEQYERAEEAPRAAEPDRLAEARAAAPN. S5 is subject to Phosphoserine. Residues 39-319 form the IF rod domain; it reads NLAALQGLGE…RIIENEGNRL (281 aa). Residues 40–74 are coil 1A; it reads LAALQGLGERVAAHVQRARALEQRHAVLRRQLDAF. A41 is subject to N-acetylalanine. Residues 75–83 form a linker 1 region; it reads QRLDELAGP. The interval 84–183 is coil 1B; that stretch reads EDALARHVEG…RYKKNLLEIQ (100 aa). Residues 184 to 200 form a linker 12 region; sequence TYVTILQQIIQTTPQAA. The interval 201–319 is coil 2; it reads AITSGMREEK…RIIENEGNRL (119 aa). The segment at 320–756 is tail; it reads SSAFIETPIT…KKLGEKGSSS (437 aa). Residues S340 and S419 each carry the phosphoserine modification. Disordered regions lie at residues 406-436 and 493-705; these read EGES…GGKI and GVVV…PPRK. The N-myristoyl glycine moiety is linked to residue G433. The segment covering 493 to 512 has biased composition (low complexity); sequence GVVVSKGDDSVPPDSGVEPS. S512 is modified (phosphoserine). The segment covering 528-658 has biased composition (basic and acidic residues); sequence QEKEDGLKEE…KQDDQKEEGA (131 aa). Copy 1 of the repeat occupies 532–545; it reads DGLKEEGGPPEGKG. Residues 532 to 622 form a 7 X 14 AA tandem repeats region; that stretch reads DGLKEEGGPP…EEEGPLQKKE (91 aa). The stretch at 546–552 is one 2; truncated repeat; sequence EPPEGKG. A run of 5 repeats spans residues 553-566, 567-580, 581-594, 595-608, and 609-622. A phosphothreonine mark is found at T628 and T674. 3 positions are modified to phosphoserine: S701, S754, and S755.

It belongs to the intermediate filament family. In terms of assembly, part of a complex required for lens intermediate filament formation composed of BFSP1, BFSP2 and CRYAA. Identified in a complex that contains VIM, EZR, AHNAK, BFSP1, BFSP2, ANK2, PLEC, PRX and spectrin. Found in a complex composed of PPL (via C-terminal linker domain), BFSP1 and BFSP2 in the retinal lens. Within the complex interacts with BFSP2. Interacts (via C-terminus) with MIP (via C-terminus) in aged lens fiber cells. In terms of processing, proteolytically cleaved during lens cell fiber differentiation with increased fragmentation as fiber cell age increases. Post-translationally, myristoylated at Gly-433 following proteolytic cleavage at Asp-432. Acetylated at Ala-41 following proteolytic cleavage at Leu-40. Abundantly expressed in both the inner and outer cortex of the retina, expressed at a lower level in the nucleus of the retina (at protein level). Detected in eye lens fiber cells (at protein level).

The protein resides in the cell membrane. It is found in the cytoplasm. Its subcellular location is the cytoskeleton. It localises to the cell cortex. Functionally, required for the correct formation of lens intermediate filaments as part of a complex composed of BFSP1, BFSP2 and CRYAA. Involved in altering the calcium regulation of MIP water permeability. This is Filensin (BFSP1) from Bos taurus (Bovine).